Consider the following 247-residue polypeptide: Phosphoribosylaminoimidazole-succinocarboxamide synthase (247 aa).

Belongs to the SAICAR synthetase family.

It carries out the reaction 5-amino-1-(5-phospho-D-ribosyl)imidazole-4-carboxylate + L-aspartate + ATP = (2S)-2-[5-amino-1-(5-phospho-beta-D-ribosyl)imidazole-4-carboxamido]succinate + ADP + phosphate + 2 H(+). It functions in the pathway purine metabolism; IMP biosynthesis via de novo pathway; 5-amino-1-(5-phospho-D-ribosyl)imidazole-4-carboxamide from 5-amino-1-(5-phospho-D-ribosyl)imidazole-4-carboxylate: step 1/2. The polypeptide is Phosphoribosylaminoimidazole-succinocarboxamide synthase (Herpetosiphon aurantiacus (strain ATCC 23779 / DSM 785 / 114-95)).